A 348-amino-acid polypeptide reads, in one-letter code: GMP reductase (348 aa).

108–131 (ADFQKTKDVMALSDELIFICIDIA) contributes to the NADP(+) binding site. Glycine 181 and glycine 183 together coordinate K(+). The active-site Thioimidate intermediate is the cysteine 186. NADP(+) is bound at residue 216–239 (IIGDGGCACAGDVAKAFGGGADFV).

It belongs to the IMPDH/GMPR family. GuaC type 1 subfamily. As to quaternary structure, homotetramer.

The catalysed reaction is IMP + NH4(+) + NADP(+) = GMP + NADPH + 2 H(+). Its function is as follows. Catalyzes the irreversible NADPH-dependent deamination of GMP to IMP. It functions in the conversion of nucleobase, nucleoside and nucleotide derivatives of G to A nucleotides, and in maintaining the intracellular balance of A and G nucleotides. The polypeptide is GMP reductase (Vibrio vulnificus (strain CMCP6)).